The following is a 275-amino-acid chain: Homeobox protein Hox-C12a (275 aa).

Disordered stretches follow at residues 101–129 and 148–213; these read SRENCSGGGSLKREDRARDTSALTSDHGM and QLTQ…KRKP. The segment covering 155–177 has biased composition (low complexity); that stretch reads SCQSMESDSSSSLLNEASKPSSS. Over residues 178–194 the composition is skewed to polar residues; it reads DTQTLVSPGSHTGTITA. The homeobox DNA-binding region spans 207-266; it reads TRKKRKPYSKLQLAELEGEFMMNEFITRQRRRELSDRLNLSDQQVKIWFQNRRMKKKRLM.

It belongs to the Abd-B homeobox family.

It localises to the nucleus. In terms of biological role, sequence-specific transcription factor which is part of a developmental regulatory system that provides cells with specific positional identities on the anterior-posterior axis. In Takifugu rubripes (Japanese pufferfish), this protein is Homeobox protein Hox-C12a (hoxc12a).